The chain runs to 221 residues: NAD(P)H-hydrate epimerase (221 aa).

One can recognise a YjeF N-terminal domain in the interval 9-219; sequence MRELETAAVK…NIGLPKELLS (211 aa). 60–64 is a binding site for (6S)-NADPHX; it reads GNGGD. Positions 61 and 131 each coordinate K(+). (6S)-NADPHX contacts are provided by residues 135-141, Tyr146, and Asp164; that span reads GIGFKGE. Ser167 lines the K(+) pocket.

The protein belongs to the NnrE/AIBP family. Requires K(+) as cofactor.

It carries out the reaction (6R)-NADHX = (6S)-NADHX. The catalysed reaction is (6R)-NADPHX = (6S)-NADPHX. Functionally, catalyzes the epimerization of the S- and R-forms of NAD(P)HX, a damaged form of NAD(P)H that is a result of enzymatic or heat-dependent hydration. This is a prerequisite for the S-specific NAD(P)H-hydrate dehydratase to allow the repair of both epimers of NAD(P)HX. The polypeptide is NAD(P)H-hydrate epimerase (Elusimicrobium minutum (strain Pei191)).